Here is a 115-residue protein sequence, read N- to C-terminus: Large ribosomal subunit protein bL19 (115 aa).

The protein belongs to the bacterial ribosomal protein bL19 family.

Functionally, this protein is located at the 30S-50S ribosomal subunit interface and may play a role in the structure and function of the aminoacyl-tRNA binding site. The chain is Large ribosomal subunit protein bL19 from Erwinia tasmaniensis (strain DSM 17950 / CFBP 7177 / CIP 109463 / NCPPB 4357 / Et1/99).